The sequence spans 129 residues: MAKTPVRARKRVKKQVVDGVAHIHASFNNTIVTITDRQGNALAWATAGGSGFRGSRKSTPFAAQVAAERCAEAVKEFGLKNLEVMVKGPGPGRESTIRALNAAGFRITNITDVTPIPHNGCRPPKKRRV.

Belongs to the universal ribosomal protein uS11 family. In terms of assembly, part of the 30S ribosomal subunit. Interacts with proteins S7 and S18. Binds to IF-3.

In terms of biological role, located on the platform of the 30S subunit, it bridges several disparate RNA helices of the 16S rRNA. Forms part of the Shine-Dalgarno cleft in the 70S ribosome. The polypeptide is Small ribosomal subunit protein uS11 (Mannheimia succiniciproducens (strain KCTC 0769BP / MBEL55E)).